Reading from the N-terminus, the 68-residue chain is Guanine nucleotide-binding protein G(I)/G(S)/G(O) subunit gamma-5B (68 aa).

The 66-residue stretch at Gly-3–Leu-68 folds into the G protein gamma domain. Cys-65 bears the Cysteine methyl ester mark. Cys-65 carries the S-geranylgeranyl cysteine lipid modification. The propeptide at Ser-66–Leu-68 is removed in mature form.

It belongs to the G protein gamma family. As to quaternary structure, g proteins are composed of 3 units; alpha, beta and gamma.

It localises to the cell membrane. In terms of biological role, guanine nucleotide-binding proteins (G proteins) are involved as a modulator or transducer in various transmembrane signaling systems. The beta and gamma chains are required for the GTPase activity, for replacement of GDP by GTP, and for G protein-effector interaction. This chain is Guanine nucleotide-binding protein G(I)/G(S)/G(O) subunit gamma-5B, found in Homo sapiens (Human).